Here is a 225-residue protein sequence, read N- to C-terminus: Membrane protein (225 aa).

Topologically, residues 1-20 (MSNETNCTLDFEQSVELFKE) are virion surface. A helical membrane pass occupies residues 21 to 41 (YNLFITAFLLFLTIILQYGYA). The Intravirion portion of the chain corresponds to 42–51 (TRSKFIYILK). A helical transmembrane segment spans residues 52–72 (MIVLWCFWPLNIAVGVISCIY). The Virion surface portion of the chain corresponds to 73 to 77 (PPNTG). The chain crosses the membrane as a helical span at residues 78–98 (GLVAAIILTVFACLSFVGYWI). Residues 99–225 (QSIRLFKRCR…VATGGSSLYT (127 aa)) lie on the Intravirion side of the membrane.

This sequence belongs to the gammacoronaviruses M protein family. In terms of assembly, homomultimer. Interacts with envelope E protein in the budding compartment of the host cell, which is located between endoplasmic reticulum and the Golgi complex. Forms a complex with HE and S proteins. Interacts with nucleocapsid N protein. This interaction probably participates in RNA packaging into the virus.

The protein resides in the virion membrane. The protein localises to the host Golgi apparatus membrane. In terms of biological role, component of the viral envelope that plays a central role in virus morphogenesis and assembly via its interactions with other viral proteins. The polypeptide is Membrane protein (Gallus gallus (Chicken)).